Here is a 173-residue protein sequence, read N- to C-terminus: Alpha-crystallin A chain (173 aa).

Methionine 1 is modified (N-acetylmethionine). Positions 1-63 (MDIAIQHPWF…RSVLDSGVSE (63 aa)) are required for complex formation with BFSP1 and BFSP2. Glutamine 6 carries the post-translational modification Deamidated glutamine; partial. Serine 45 carries the phosphoserine modification. Position 50 is a deamidated glutamine; partial (glutamine 50). The region spanning 52-162 (LFRSVLDSGV…GHSERAIPVS (111 aa)) is the sHSP domain. N6-acetyllysine is present on lysine 70. Glutamine 90 is modified (deamidated glutamine; partial). Residue lysine 99 is modified to N6-acetyllysine. Histidine 100 lines the Zn(2+) pocket. Asparagine 101 is subject to Deamidated asparagine; partial. Residues glutamate 102 and histidine 107 each coordinate Zn(2+). Serine 122 is modified (phosphoserine). The residue at position 123 (asparagine 123) is a Deamidated asparagine; partial. The segment at 144 to 173 (PKIPSGMDAGHSERAIPVSREEKPSSAPSS) is disordered. A compositionally biased stretch (basic and acidic residues) spans 153 to 167 (GHSERAIPVSREEKP). A Zn(2+)-binding site is contributed by histidine 154. An O-linked (GlcNAc) serine glycan is attached at serine 162.

Belongs to the small heat shock protein (HSP20) family. In terms of assembly, heteromer composed of three CRYAA and one CRYAB subunits. Inter-subunit bridging via zinc ions enhances stability, which is crucial as there is no protein turn over in the lens. Can also form homodimers and homotetramers (dimers of dimers) which serve as the building blocks of homooligomers. Within homooligomers, the zinc-binding motif is created from residues of 3 different molecules. His-100 and Glu-102 from one molecule are ligands of the zinc ion, and His-107 and His-154 residues from additional molecules complete the site with tetrahedral coordination geometry. Part of a complex required for lens intermediate filament formation composed of BFSP1, BFSP2 and CRYAA. Post-translationally, acetylation at Lys-70 may increase chaperone activity. Undergoes age-dependent proteolytical cleavage at the C-terminus.

It is found in the cytoplasm. The protein resides in the nucleus. Its function is as follows. Contributes to the transparency and refractive index of the lens. Acts as a chaperone, preventing aggregation of various proteins under a wide range of stress conditions. Required for the correct formation of lens intermediate filaments as part of a complex composed of BFSP1, BFSP2 and CRYAA. The sequence is that of Alpha-crystallin A chain (CRYAA) from Ceratotherium simum (White rhinoceros).